Reading from the N-terminus, the 521-residue chain is Protein NRT1/ PTR FAMILY 4.2 (521 aa).

The next 12 membrane-spanning stretches (helical) occupy residues 30 to 50, 65 to 85, 89 to 109, 133 to 153, 172 to 192, 204 to 224, 297 to 317, 338 to 358, 381 to 401, 413 to 433, 451 to 471, and 498 to 518; these read IVCV…FNFV, ANMV…GGFI, FVTH…GLIL, AILF…KASL, FFDW…TVVL, FNIS…GLPF, FLGL…VAQL, IPVP…IPLY, IGLG…VEAK, ISVL…MLTL, ISTA…TTLV, and LFYV…IFWA.

Belongs to the major facilitator superfamily. Proton-dependent oligopeptide transporter (POT/PTR) (TC 2.A.17) family. Expressed in siliques.

It localises to the membrane. In terms of biological role, involved in abscisic acid transport. The sequence is that of Protein NRT1/ PTR FAMILY 4.2 (NPF4.2) from Arabidopsis thaliana (Mouse-ear cress).